A 102-amino-acid chain; its full sequence is Small ribosomal subunit protein uS10 (102 aa).

This sequence belongs to the universal ribosomal protein uS10 family. In terms of assembly, part of the 30S ribosomal subunit.

Functionally, involved in the binding of tRNA to the ribosomes. This is Small ribosomal subunit protein uS10 from Syntrophotalea carbinolica (strain DSM 2380 / NBRC 103641 / GraBd1) (Pelobacter carbinolicus).